Here is a 523-residue protein sequence, read N- to C-terminus: Probable aminopeptidase NPEPL1 (523 aa).

Zn(2+) is bound by residues K260 and D265. The active site involves K272. D283, D342, and E344 together coordinate Zn(2+). The active site involves R346.

It belongs to the peptidase M17 family. It depends on Zn(2+) as a cofactor. Mn(2+) is required as a cofactor. As to expression, ubiquitously expressed.

Its function is as follows. Probably catalyzes the removal of unsubstituted N-terminal amino acids from various peptides. This chain is Probable aminopeptidase NPEPL1 (NPEPL1), found in Homo sapiens (Human).